Here is a 332-residue protein sequence, read N- to C-terminus: Stage II sporulation protein B (332 aa).

Residues 1 to 10 (MKKRKNKKNS) show a composition bias toward basic residues. Residues 1 to 71 (MKKRKNKKNS…EHPDEDEFNW (71 aa)) form a disordered region. Positions 11–27 (KAAEKALKVTINGKEET) are enriched in basic and acidic residues. The helical transmembrane segment at 112-132 (AATIAFAAVIGTGLGLFALNI) threads the bilayer. Residues 139 to 174 (SAPASLEDSLGSQTAKAGDTSADKQTSGAEKQAAQT) form a disordered region. Over residues 161–174 (DKQTSGAEKQAAQT) the composition is skewed to polar residues. Residues 175-250 (EGTYKTYAVQ…SDFEAWGGKE (76 aa)) form the SPOR domain.

The protein resides in the cell membrane. Appears to be degraded early in engulfment, in correlation with its loss from polar septa. Facilitates the rapid and spatially regulated dissolution of septal peptidoglycan. The protein is Stage II sporulation protein B of Bacillus subtilis (strain 168).